Reading from the N-terminus, the 688-residue chain is ATP-dependent zinc metalloprotease FTSH 6, chloroplastic (688 aa).

The N-terminal 75 residues, 1–75 (MKMASSSSAL…GFTSALGTVL (75 aa)), are a transit peptide targeting the chloroplast. A compositionally biased stretch (polar residues) spans 25–36 (QQFQKPASLSKS). The tract at residues 25–44 (QQFQKPASLSKSSHTHKPSL) is disordered. The transit peptide at 76-83 (AHPAKAEP) directs the protein to the thylakoid. The Lumenal, thylakoid portion of the chain corresponds to 84 to 168 (EAPIEATSNR…AHPMNVNWGA (85 aa)). Residues 169-189 (FLLNFLGNLGFPLILLVSLLL) form a helical membrane-spanning segment. At 190-688 (TSSSRRNPAG…RIRINDLISV (499 aa)) the chain is on the stromal side. An ATP-binding site is contributed by 264 to 271 (GPPGTGKT). His485 is a Zn(2+) binding site. Glu486 is an active-site residue. Zn(2+) contacts are provided by His489 and Asp563.

The protein in the N-terminal section; belongs to the AAA ATPase family. This sequence in the C-terminal section; belongs to the peptidase M41 family. Zn(2+) serves as cofactor.

The protein resides in the plastid. Its subcellular location is the chloroplast thylakoid membrane. Functionally, probable ATP-dependent zinc metallopeptidase. Involved in the degradation of the light-harvesting complex of photosystem II (LHC II) during senescence or high light acclimation. In Arabidopsis thaliana (Mouse-ear cress), this protein is ATP-dependent zinc metalloprotease FTSH 6, chloroplastic (FTSH6).